The chain runs to 316 residues: 4-hydroxy-3-methylbut-2-enyl diphosphate reductase (316 aa).

Cys-17 contacts [4Fe-4S] cluster. Residues His-46 and His-79 each contribute to the (2E)-4-hydroxy-3-methylbut-2-enyl diphosphate site. His-46 and His-79 together coordinate dimethylallyl diphosphate. His-46 and His-79 together coordinate isopentenyl diphosphate. Cys-101 is a binding site for [4Fe-4S] cluster. His-129 lines the (2E)-4-hydroxy-3-methylbut-2-enyl diphosphate pocket. Residue His-129 coordinates dimethylallyl diphosphate. Residue His-129 coordinates isopentenyl diphosphate. Glu-131 serves as the catalytic Proton donor. (2E)-4-hydroxy-3-methylbut-2-enyl diphosphate is bound at residue Thr-170. Cys-200 contributes to the [4Fe-4S] cluster binding site. Residues Ser-228, Ser-229, Asn-230, and Ser-273 each contribute to the (2E)-4-hydroxy-3-methylbut-2-enyl diphosphate site. Dimethylallyl diphosphate is bound by residues Ser-228, Ser-229, Asn-230, and Ser-273. 4 residues coordinate isopentenyl diphosphate: Ser-228, Ser-229, Asn-230, and Ser-273.

This sequence belongs to the IspH family. [4Fe-4S] cluster serves as cofactor.

The catalysed reaction is isopentenyl diphosphate + 2 oxidized [2Fe-2S]-[ferredoxin] + H2O = (2E)-4-hydroxy-3-methylbut-2-enyl diphosphate + 2 reduced [2Fe-2S]-[ferredoxin] + 2 H(+). It catalyses the reaction dimethylallyl diphosphate + 2 oxidized [2Fe-2S]-[ferredoxin] + H2O = (2E)-4-hydroxy-3-methylbut-2-enyl diphosphate + 2 reduced [2Fe-2S]-[ferredoxin] + 2 H(+). It functions in the pathway isoprenoid biosynthesis; dimethylallyl diphosphate biosynthesis; dimethylallyl diphosphate from (2E)-4-hydroxy-3-methylbutenyl diphosphate: step 1/1. Its pathway is isoprenoid biosynthesis; isopentenyl diphosphate biosynthesis via DXP pathway; isopentenyl diphosphate from 1-deoxy-D-xylulose 5-phosphate: step 6/6. Functionally, catalyzes the conversion of 1-hydroxy-2-methyl-2-(E)-butenyl 4-diphosphate (HMBPP) into a mixture of isopentenyl diphosphate (IPP) and dimethylallyl diphosphate (DMAPP). Acts in the terminal step of the DOXP/MEP pathway for isoprenoid precursor biosynthesis. The polypeptide is 4-hydroxy-3-methylbut-2-enyl diphosphate reductase (Ruegeria pomeroyi (strain ATCC 700808 / DSM 15171 / DSS-3) (Silicibacter pomeroyi)).